The sequence spans 586 residues: Chaperone protein HscA homolog (586 aa).

It belongs to the heat shock protein 70 family.

Chaperone involved in the maturation of iron-sulfur cluster-containing proteins. Has a low intrinsic ATPase activity which is markedly stimulated by HscB. This Rickettsia typhi (strain ATCC VR-144 / Wilmington) protein is Chaperone protein HscA homolog.